Consider the following 227-residue polypeptide: UPF0758 protein Dred_2549 (227 aa).

The 123-residue stretch at 105-227 (IIRCPEDVCG…FTSLKSKGLI (123 aa)) folds into the MPN domain. Residues His-176, His-178, and Asp-189 each coordinate Zn(2+). The JAMM motif motif lies at 176–189 (HNHPSGDPTPSRED).

Belongs to the UPF0758 family.

This Desulforamulus reducens (strain ATCC BAA-1160 / DSM 100696 / MI-1) (Desulfotomaculum reducens) protein is UPF0758 protein Dred_2549.